Here is a 216-residue protein sequence, read N- to C-terminus: Chaperone protein TorD (216 aa).

Belongs to the TorD/DmsD family. TorD subfamily.

The protein localises to the cytoplasm. In terms of biological role, involved in the biogenesis of TorA. Acts on TorA before the insertion of the molybdenum cofactor and, as a result, probably favors a conformation of the apoenzyme that is competent for acquiring the cofactor. This is Chaperone protein TorD from Ferrimonas balearica (strain DSM 9799 / CCM 4581 / KCTC 23876 / PAT).